The following is a 393-amino-acid chain: tRNA-specific 2-thiouridylase MnmA (393 aa).

Residues 19–26 (AMSGGVDS) and Leu45 contribute to the ATP site. Cys113 serves as the catalytic Nucleophile. Cys113 and Cys210 form a disulfide bridge. Gly137 contacts ATP. Positions 160-162 (RDQ) are interaction with tRNA. Residue Cys210 is the Cysteine persulfide intermediate of the active site.

Belongs to the MnmA/TRMU family.

Its subcellular location is the cytoplasm. It carries out the reaction S-sulfanyl-L-cysteinyl-[protein] + uridine(34) in tRNA + AH2 + ATP = 2-thiouridine(34) in tRNA + L-cysteinyl-[protein] + A + AMP + diphosphate + H(+). Functionally, catalyzes the 2-thiolation of uridine at the wobble position (U34) of tRNA, leading to the formation of s(2)U34. The chain is tRNA-specific 2-thiouridylase MnmA from Afipia carboxidovorans (strain ATCC 49405 / DSM 1227 / KCTC 32145 / OM5) (Oligotropha carboxidovorans).